The chain runs to 225 residues: Phosphoserine phosphatase (225 aa).

An N-acetylmethionine modification is found at Met-1. The active-site Nucleophile is Asp-20. Mg(2+) is bound by residues Asp-20 and Asp-22. Residue 20 to 22 (DVD) coordinates L-serine. Asp-22 serves as the catalytic Proton donor. Met-52 is an O-phospho-L-serine binding site. Gly-53 serves as a coordination point for phosphate. Residues 109–111 (SGG) and Lys-158 contribute to the L-serine site. O-phospho-L-serine contacts are provided by residues 109–111 (SGG) and Lys-158. A Mg(2+)-binding site is contributed by Asp-179. Thr-182 contributes to the O-phospho-L-serine binding site. Thr-182 contacts phosphate.

It belongs to the HAD-like hydrolase superfamily. SerB family. As to quaternary structure, homodimer. Mg(2+) is required as a cofactor.

Its subcellular location is the cytoplasm. It localises to the cytosol. The catalysed reaction is O-phospho-L-serine + H2O = L-serine + phosphate. It carries out the reaction O-phospho-D-serine + H2O = D-serine + phosphate. It participates in amino-acid biosynthesis; L-serine biosynthesis; L-serine from 3-phospho-D-glycerate: step 3/3. With respect to regulation, inhibited by calcium ions. Its function is as follows. Catalyzes the last irreversible step in the biosynthesis of L-serine from carbohydrates, the dephosphorylation of O-phospho-L-serine to L-serine. L-serine can then be used in protein synthesis, to produce other amino acids, in nucleotide metabolism or in glutathione synthesis, or can be racemized to D-serine, a neuromodulator. May also act on O-phospho-D-serine. This chain is Phosphoserine phosphatase, found in Homo sapiens (Human).